Reading from the N-terminus, the 620-residue chain is GTP-binding protein At3g49725, chloroplastic (620 aa).

The N-terminal 65 residues, Met-1–Arg-65, are a transit peptide targeting the chloroplast. The interval Ser-57–Pro-100 is disordered. The Hflx-type G domain occupies Gly-346–Lys-585. GTP is bound by residues Gly-352 to Ser-359, Phe-377 to Asp-381, Asp-399 to Gly-402, and Asn-468 to Asp-471. Mg(2+) is bound by residues Ser-359 and Thr-379. Composition is skewed to acidic residues over residues Glu-478 to Ala-497 and Thr-511 to Asp-521. A disordered region spans residues Glu-478 to Asp-521. A GTP-binding site is contributed by Ser-563–Leu-565. The disordered stretch occupies residues Leu-597–Arg-620.

The protein belongs to the TRAFAC class OBG-HflX-like GTPase superfamily. HflX GTPase family. Mg(2+) serves as cofactor.

It is found in the plastid. The protein resides in the chloroplast. The chain is GTP-binding protein At3g49725, chloroplastic from Arabidopsis thaliana (Mouse-ear cress).